A 179-amino-acid chain; its full sequence is Pyridoxal 5'-phosphate synthase subunit PdxT (179 aa).

48–50 provides a ligand contact to L-glutamine; it reads GES. The Nucleophile role is filled by Cys79. L-glutamine contacts are provided by residues Arg101 and 127-128; that span reads IR. Catalysis depends on charge relay system residues His163 and Glu165.

It belongs to the glutaminase PdxT/SNO family. In the presence of PdxS, forms a dodecamer of heterodimers. Only shows activity in the heterodimer.

It carries out the reaction aldehydo-D-ribose 5-phosphate + D-glyceraldehyde 3-phosphate + L-glutamine = pyridoxal 5'-phosphate + L-glutamate + phosphate + 3 H2O + H(+). It catalyses the reaction L-glutamine + H2O = L-glutamate + NH4(+). Its pathway is cofactor biosynthesis; pyridoxal 5'-phosphate biosynthesis. Catalyzes the hydrolysis of glutamine to glutamate and ammonia as part of the biosynthesis of pyridoxal 5'-phosphate. The resulting ammonia molecule is channeled to the active site of PdxS. This Francisella tularensis subsp. novicida (strain U112) protein is Pyridoxal 5'-phosphate synthase subunit PdxT.